We begin with the raw amino-acid sequence, 60 residues long: Large ribosomal subunit protein uL30 (60 aa).

The protein belongs to the universal ribosomal protein uL30 family. As to quaternary structure, part of the 50S ribosomal subunit.

The polypeptide is Large ribosomal subunit protein uL30 (Agathobacter rectalis (strain ATCC 33656 / DSM 3377 / JCM 17463 / KCTC 5835 / VPI 0990) (Eubacterium rectale)).